The chain runs to 406 residues: LIM/homeobox protein Lhx2 (406 aa).

2 LIM zinc-binding domains span residues Cys53–Asp105 and Cys115–His168. The disordered stretch occupies residues Asp250–Arg270. Residues Thr266–Leu325 constitute a DNA-binding region (homeobox). Residues Lys307 to Arg323 carry the Nuclear localization signal motif. The span at Gln328–Ala356 shows a compositional bias: polar residues. Disordered regions lie at residues Gln328–Thr374 and Gly387–Phe406. Low complexity predominate over residues Ser357 to Thr374. The span at Ser396–Phe406 shows a compositional bias: polar residues.

In terms of assembly, interacts (via LIM domains) with CITED2. Interacts with POU4F2.

It localises to the nucleus. Acts as a transcriptional activator. Stimulates the promoter of the alpha-glycoprotein gene. Transcriptional regulatory protein involved in the control of cell differentiation in developing lymphoid and neural cell types. The protein is LIM/homeobox protein Lhx2 (LHX2) of Homo sapiens (Human).